The sequence spans 310 residues: MPRIAYLGPEGTFTEAALLQMVAKGMVPGPAEDAGGFTPVRTDSTPGALSAVREGRADYACVPIENSIDGTVLPTLDSLAAGSPLQIYAELTLDVAFTIVVRPGHDGPVRTVAAFPVAAAQVRHWLAANLRDAEVVPAHSNAAAAHDVAEGRADAGVSTRLAAERCGLDIMAADVVDEPNARTRFVLVGLPGTPPPATGADRTAVVLRLVNEPGALVSAMTEFSIRDIDLTRIESRPTRTELGTYMFFLDCAGHIDDDPVAEALKALHRRCVDVRYLGSWPTESAAGAPPPRLDEATTWLEGLRAGSGGA.

Positions 3-190 (RIAYLGPEGT…ARTRFVLVGL (188 aa)) constitute a Prephenate dehydratase domain. Residues 204–281 (AVVLRLVNEP…VDVRYLGSWP (78 aa)) enclose the ACT domain.

In terms of assembly, homodimer.

It carries out the reaction prephenate + H(+) = 3-phenylpyruvate + CO2 + H2O. Its pathway is amino-acid biosynthesis; L-phenylalanine biosynthesis; phenylpyruvate from prephenate: step 1/1. This chain is Prephenate dehydratase (pheA), found in Mycolicibacterium smegmatis (strain ATCC 700084 / mc(2)155) (Mycobacterium smegmatis).